A 452-amino-acid polypeptide reads, in one-letter code: Sesamin methylene transferase (452 aa).

It belongs to the GcvT family. As to quaternary structure, homotrimer.

It carries out the reaction (+)-sesamin + (6S)-5,6,7,8-tetrahydrofolyl-(gamma-L-Glu)(n) = (+)-sesamin monocatechol + (6R)-5,10-methylenetetrahydrofolyl-(gamma-L-Glu)(n). The catalysed reaction is (+)-sesamin monocatechol + (6S)-5,6,7,8-tetrahydrofolyl-(gamma-L-Glu)(n) = (+)-sesamin dicatechol + (6R)-5,10-methylenetetrahydrofolyl-(gamma-L-Glu)(n). Its function is as follows. Converts sesamin into sesamin mono- and di-catechol. Catalyzes a ring cleavage to transfer the methylene group to tetrahydrofolate (THF). Also active with (+)-episesamin, (-)-asarinin, sesaminol, (+)-sesamolin and piperine. The polypeptide is Sesamin methylene transferase (Sinomonas sp. (strain No.22)).